We begin with the raw amino-acid sequence, 554 residues long: Outer envelope protein 61 (554 aa).

Topologically, residues 1–525 (MFNGLMDPEM…GMEKAKKAKK (525 aa)) are cytoplasmic. 2 TPR repeats span residues 103-136 (AQML…LKEI) and 180-213 (VKAL…SPED). 2 disordered regions span residues 245–269 (TEEN…AQGV) and 395–439 (APAS…PSAP). Basic and acidic residues predominate over residues 254 to 263 (ENKKPSKEAN). The segment covering 412 to 423 (SLGASGSSSGNS) has biased composition (low complexity). Residues 526 to 546 (WLFGKGGLIFAILMLVLAMVL) traverse the membrane as a helical segment. Residues 547–554 (HRLGYIGN) are Lumenal-facing.

As to quaternary structure, interacts (via TPR region) with HSP70-1, but not with HSP90-2. Interacts with ERDJ2A and ERDJ2B. In the ER membrane, associates with ERDJ2 in membrane complexes of 140 and 200 kDa and specifically interacts with the HSP70 and HSP90 chaperones via its TPR domain. Ubiquitous. Highest expression in leaves and lowest in roots.

Its subcellular location is the endoplasmic reticulum membrane. It is found in the plastid. The protein resides in the chloroplast outer membrane. Functionally, plays a role in protein import into the endoplasmic reticulum (ER). May function as chaperone docking protein during post-translational protein translocation into the ER. Chaperone receptor mediating Hsp70-dependent protein targeting to chloroplasts. Interacts specifically with some chloroplast precursors, but not with mitochondrial precursors. Able to select precursors for delivery to the chloroplast translocase independently of Hsp70. In Arabidopsis thaliana (Mouse-ear cress), this protein is Outer envelope protein 61 (OEP61).